We begin with the raw amino-acid sequence, 351 residues long: Histidinol-phosphate aminotransferase (351 aa).

Lysine 215 is subject to N6-(pyridoxal phosphate)lysine.

It belongs to the class-II pyridoxal-phosphate-dependent aminotransferase family. Histidinol-phosphate aminotransferase subfamily. Requires pyridoxal 5'-phosphate as cofactor.

The enzyme catalyses L-histidinol phosphate + 2-oxoglutarate = 3-(imidazol-4-yl)-2-oxopropyl phosphate + L-glutamate. It participates in amino-acid biosynthesis; L-histidine biosynthesis; L-histidine from 5-phospho-alpha-D-ribose 1-diphosphate: step 7/9. This Methanocorpusculum labreanum (strain ATCC 43576 / DSM 4855 / Z) protein is Histidinol-phosphate aminotransferase.